The sequence spans 293 residues: MFDWRRLKPLRPHQIFFFYTTIQNYSDNGYQYSYKSNQIKSNQIKLNQQQQTSRQLIRINNQLPPSVVLHNIIMKSILITTGATITFKSLIQIILSPQFLNNLIRLKINKLIIQYGHEIKNSINLSESFFNETINKYDLINLFNLEIEETPIGDDDDDEGIRLFKNSDIEILAFSYSSNINKYIENVDLIISHAGTGSIIDCLHLNKPLIVIVNDKLMDNHQLEIAQQFTKLNYCIYYSIKELEQYVNNNDNNKDSRFWNQLNQLINGELQLNKLPQTDGSIIETIICEELEK.

It belongs to the glycosyltransferase 28 family. Heterodimer with ALG14 to form a functional enzyme.

It localises to the endoplasmic reticulum. The catalysed reaction is an N-acetyl-alpha-D-glucosaminyl-diphospho-di-trans,poly-cis-dolichol + UDP-N-acetyl-alpha-D-glucosamine = an N,N'-diacetylchitobiosyl-diphospho-di-trans,poly-cis-dolichol + UDP + H(+). In terms of biological role, involved in protein N-glycosylation. Essential for the second step of the dolichol-linked oligosaccharide pathway. In Candida albicans (strain SC5314 / ATCC MYA-2876) (Yeast), this protein is UDP-N-acetylglucosamine transferase subunit ALG13 (ALG13).